We begin with the raw amino-acid sequence, 271 residues long: MKI67 FHA domain-interacting nucleolar phosphoprotein (271 aa).

A disordered region spans residues 1–20; sequence MAEYSGPAKPTLALNPREDS. Alanine 2 bears the N-acetylalanine mark. Residue lysine 37 forms a Glycyl lysine isopeptide (Lys-Gly) (interchain with G-Cter in SUMO2) linkage. In terms of domain architecture, RRM spans 44 to 122; that stretch reads GVVYLGHLPS…RLLSCKFMPR (79 aa). Arginine 113 carries the omega-N-methylarginine modification. Residues lysine 178 and lysine 191 each participate in a glycyl lysine isopeptide (Lys-Gly) (interchain with G-Cter in SUMO2) cross-link. A phosphothreonine mark is found at threonine 213 and threonine 217. 2 positions are modified to omega-N-methylated arginine: arginine 223 and arginine 224. Serine 226 carries the post-translational modification Phosphoserine. Residues 242–271 form a disordered region; it reads PVSPVKEDTQKTPAPESSGKKRLRKRKSKQ. Lysine 247 is covalently cross-linked (Glycyl lysine isopeptide (Lys-Gly) (interchain with G-Cter in SUMO1); alternate). Residue lysine 247 forms a Glycyl lysine isopeptide (Lys-Gly) (interchain with G-Cter in SUMO2); alternate linkage. Positions 261-271 are enriched in basic residues; the sequence is KKRLRKRKSKQ.

Binds to the FHA domain of MKI67; this interaction is enhanced in mitosis. Phosphorylated.

It localises to the nucleus. It is found in the nucleolus. The protein localises to the chromosome. The polypeptide is MKI67 FHA domain-interacting nucleolar phosphoprotein (Nifk) (Rattus norvegicus (Rat)).